Consider the following 431-residue polypeptide: Beta-lactamase hydrolase-like protein (431 aa).

Zn(2+) contacts are provided by His-212, His-214, and His-286. Residue Asp-309 participates in substrate binding.

The protein belongs to the metallo-beta-lactamase superfamily. Zn(2+) serves as cofactor.

Functionally, could play a role in cell adherence or biofilm development. The protein is Beta-lactamase hydrolase-like protein of Agrobacterium fabrum (strain C58 / ATCC 33970) (Agrobacterium tumefaciens (strain C58)).